The following is a 247-amino-acid chain: Large ribosomal subunit protein uL30z (247 aa).

This sequence belongs to the universal ribosomal protein uL30 family.

The sequence is that of Large ribosomal subunit protein uL30z (RPL7A) from Arabidopsis thaliana (Mouse-ear cress).